The following is a 522-amino-acid chain: GMP synthase [glutamine-hydrolyzing] (522 aa).

The Glutamine amidotransferase type-1 domain maps to 9-204 (KILILDFGAQ…VVDICGCQTL (196 aa)). Cys-86 functions as the Nucleophile in the catalytic mechanism. Residues His-178 and Glu-180 contribute to the active site. A GMPS ATP-PPase domain is found at 205 to 397 (WTSANIIEDQ…LGLPHAMVYR (193 aa)). 232–238 (SGGVDSS) lines the ATP pocket.

As to quaternary structure, homodimer.

The catalysed reaction is XMP + L-glutamine + ATP + H2O = GMP + L-glutamate + AMP + diphosphate + 2 H(+). It participates in purine metabolism; GMP biosynthesis; GMP from XMP (L-Gln route): step 1/1. Catalyzes the synthesis of GMP from XMP. In Xylella fastidiosa (strain M23), this protein is GMP synthase [glutamine-hydrolyzing].